Consider the following 224-residue polypeptide: MMKGSPPTVEEERALCAVGYRAIAGIDEAGRGCWAGPVVAAAVILPERVIAKPELLDGVADSKMLTPAQRVALFERITSLAVAWAVGSVPAHVIDSHGILPATRLAMQVALLRLPLPADVLLIDAVRLDGWPLPQRVLVKGDVRCLSIAAASIIAKVMRDRFMEGLGRYWTRYGFAAHKGYGTAAHQEALRRYGPTPHHRLTFRPLCDMAPANIRNAALEGEQP.

An RNase H type-2 domain is found at 21–223 (RAIAGIDEAG…IRNAALEGEQ (203 aa)). A divalent metal cation-binding residues include D27, E28, and D124.

It belongs to the RNase HII family. Mn(2+) serves as cofactor. Requires Mg(2+) as cofactor.

Its subcellular location is the cytoplasm. It carries out the reaction Endonucleolytic cleavage to 5'-phosphomonoester.. Functionally, endonuclease that specifically degrades the RNA of RNA-DNA hybrids. This is Ribonuclease HII from Roseiflexus castenholzii (strain DSM 13941 / HLO8).